Reading from the N-terminus, the 91-residue chain is Potassium channel toxin TstKMK (91 aa).

A signal peptide spans 1–25; it reads MVATNRCCVFALLFALLLVHSLTEA. The propeptide occupies 26–42; sequence GKGKEILGKIKEKIIEA. Residues 58 to 91 enclose the BetaSPN-type CS-alpha/beta domain; that stretch reads EYACPAIDKFCEDHCAAKKAVGKCDDFKCKCIKL. Intrachain disulfides connect Cys61–Cys81, Cys68–Cys86, and Cys72–Cys88.

Belongs to the long chain scorpion toxin family. Class 2 subfamily. As to expression, expressed by the venom gland.

Its subcellular location is the secreted. Its function is as follows. The full peptide presents antibacterial and cytotoxic activities. The synthetic C-terminus (AA 33-76) inhibits voltage-gated potassium channels Kv1.1/KCNA1, Kv1.2/KCNA2, and Kv1.3/KCNA3. The chain is Potassium channel toxin TstKMK from Tityus stigmurus (Brazilian scorpion).